A 239-amino-acid chain; its full sequence is Putative transcriptional regulator of 2-aminoethylphosphonate degradation operons (239 aa).

One can recognise an HTH gntR-type domain in the interval 8–76 (IPQYLLIKAQ…DRRGWFVTPE (69 aa)). A DNA-binding region (H-T-H motif) is located at residues 36 to 55 (ERELCAIFNTTRITIRESLA).

This chain is Putative transcriptional regulator of 2-aminoethylphosphonate degradation operons (phnR), found in Salmonella typhi.